The primary structure comprises 411 residues: Exodeoxyribonuclease 7 large subunit (411 aa).

It belongs to the XseA family. As to quaternary structure, heterooligomer composed of large and small subunits.

It localises to the cytoplasm. It carries out the reaction Exonucleolytic cleavage in either 5'- to 3'- or 3'- to 5'-direction to yield nucleoside 5'-phosphates.. In terms of biological role, bidirectionally degrades single-stranded DNA into large acid-insoluble oligonucleotides, which are then degraded further into small acid-soluble oligonucleotides. The protein is Exodeoxyribonuclease 7 large subunit of Mycobacterium sp. (strain JLS).